The sequence spans 61 residues: Large ribosomal subunit protein uL30 (61 aa).

This sequence belongs to the universal ribosomal protein uL30 family. In terms of assembly, part of the 50S ribosomal subunit.

This is Large ribosomal subunit protein uL30 from Bordetella petrii (strain ATCC BAA-461 / DSM 12804 / CCUG 43448).